The sequence spans 223 residues: Capsid protein (223 aa).

Over residues 1–19 (MDDETKKLKNKNKETKEGD) the composition is skewed to basic and acidic residues. Residues 1–21 (MDDETKKLKNKNKETKEGDDV) are disordered.

This sequence belongs to the closteroviridae capsid protein family. In terms of processing, consists of at least two size variants, CP1 and CP2, which result of post-translational proteolysis at sites approximately 12 to 15 and 26 AA from the N-terminus respectively.

Its subcellular location is the virion. The protein is Capsid protein of Citrus tristeza virus (isolate T36) (CTV).